We begin with the raw amino-acid sequence, 156 residues long: Small ribosomal subunit protein uS7 (156 aa).

It belongs to the universal ribosomal protein uS7 family. Part of the 30S ribosomal subunit. Contacts proteins S9 and S11.

Functionally, one of the primary rRNA binding proteins, it binds directly to 16S rRNA where it nucleates assembly of the head domain of the 30S subunit. Is located at the subunit interface close to the decoding center, probably blocks exit of the E-site tRNA. This is Small ribosomal subunit protein uS7 from Chromohalobacter salexigens (strain ATCC BAA-138 / DSM 3043 / CIP 106854 / NCIMB 13768 / 1H11).